A 281-amino-acid chain; its full sequence is 2-dehydro-3-deoxyphosphooctonate aldolase (281 aa).

The protein belongs to the KdsA family.

The protein resides in the cytoplasm. The catalysed reaction is D-arabinose 5-phosphate + phosphoenolpyruvate + H2O = 3-deoxy-alpha-D-manno-2-octulosonate-8-phosphate + phosphate. Its pathway is carbohydrate biosynthesis; 3-deoxy-D-manno-octulosonate biosynthesis; 3-deoxy-D-manno-octulosonate from D-ribulose 5-phosphate: step 2/3. It functions in the pathway bacterial outer membrane biogenesis; lipopolysaccharide biosynthesis. This chain is 2-dehydro-3-deoxyphosphooctonate aldolase, found in Pseudomonas entomophila (strain L48).